The sequence spans 1601 residues: PH and SEC7 domain-containing protein (1601 aa).

The segment at 1 to 340 (MSEELKVVLR…TGDLILNLSR (340 aa)) is mediates regulation of axon branching and microtubule organization. A PDZ domain is found at 6–88 (KVVLRRSEQH…LVTLELKRDP (83 aa)). Disordered stretches follow at residues 113–192 (NIYD…SSTK), 211–322 (TSPT…PAKA), 339–440 (SRTP…SLTN), 459–657 (LEED…SSSG), 737–780 (NSSL…SETA), 872–965 (QQQQ…LLSC), and 1040–1126 (QQLK…SDVE). Over residues 118–128 (HSSSTNSSPNH) the composition is skewed to polar residues. A compositionally biased stretch (low complexity) spans 166-191 (ASGSTTTTTTATHTHSHSRNSSASST). Residues 283–297 (QSLQHSNSYSGSPVT) show a composition bias toward polar residues. A compositionally biased stretch (basic and acidic residues) spans 300-311 (RFADREPEREPE). The Microtubule elimination domain (MTED); Binds tubulin and blocks microtubule polymerization motif lies at 323–340 (PRFEAYMMTGDLILNLSR). Residues 339–348 (SRTPQTSNPL) show a composition bias toward polar residues. Residues 353–362 (KKIDSLRDSP) are compositionally biased toward basic and acidic residues. Composition is skewed to low complexity over residues 382–399 (SSPT…TSSD), 409–424 (QKQQ…QQQQ), and 468–487 (QRQQ…YEYY). The segment covering 488-505 (QNEDELEEQEEVEEEREE) has biased composition (acidic residues). Residues 510–519 (YDITNIETYQ) show a composition bias toward polar residues. Acidic residues predominate over residues 526–557 (DDDDSDRQCLVDDDDDDDAYDDEENDAGDEDY). Composition is skewed to polar residues over residues 558 to 567 (STNSLGSGSA) and 617 to 630 (TSFS…SLST). Positions 640–657 (SVPTSPEPSSLVPESSSG) are enriched in low complexity. Positions 737-747 (NSSLASNNNEG) are enriched in polar residues. 4 stretches are compositionally biased toward low complexity: residues 752–780 (NRSS…SETA), 872–942 (QQQQ…QQQQ), 949–965 (GGQV…LLSC), and 1040–1052 (QQLK…QQQQ). The tract at residues 894 to 1601 (SSSPQHSAVG…PTNRKEKKKK (708 aa)) is mediates association to the membrane and rescricts the microtubule-inhibiting activity to the cell cortex. The segment covering 1053–1071 (QRERERDRDRDREQSEHKV) has biased composition (basic and acidic residues). The SEC7 domain maps to 1125-1291 (VESLHSYHYS…KSLYQAIKTK (167 aa)). The region spanning 1332–1445 (VEYKKGYVMR…WVETINYVCA (114 aa)) is the PH domain. Residues 1544-1601 (LELQAQQPSPASHEEEADTFPVGTTACTPPTPQSINQKDQQKEQQQQQPTNRKEKKKK) are disordered. A compositionally biased stretch (polar residues) spans 1568–1579 (TACTPPTPQSIN).

Belongs to the PSD family. As to quaternary structure, interacts (via MTED motif) with tubulin. Expressed in the head (at protein level).

It is found in the cell projection. It localises to the axon. Its subcellular location is the cytoplasm. The protein localises to the cell membrane. The protein resides in the cell cortex. Its function is as follows. Guanine nucleotide exchange factor for Arf6. Regulates axon growth and branching by inhibiting microtubule polymerisation at the cortex. Together with shot, promotes axonal microtubule bundle integrity. Required for normal ethanol-induced tolerance and preference. Probably by activating Arf6, counteracts ethanol-induced sedation. The sequence is that of PH and SEC7 domain-containing protein from Drosophila melanogaster (Fruit fly).